The chain runs to 1976 residues: Putative callose synthase 8 (1976 aa).

Topologically, residues 1 to 530 (MSHEIVPVDP…FWQIFRSFDR (530 aa)) are cytoplasmic. Residues 531–551 (MWSFFVLSLQALIIMACHDVG) form a helical membrane-spanning segment. Topologically, residues 552 to 565 (SPLQVFNANIFEDV) are extracellular. Residues 566-586 (MSIFITSAILKLIKGILDIIF) traverse the membrane as a helical segment. The Cytoplasmic portion of the chain corresponds to 587–602 (KWKARNTMPINEKKKR). A helical transmembrane segment spans residues 603-623 (LVKLGFAAMWTIILPVLYSHS). Over 624–648 (RRKYICYFTNYKTWLGEWCFSPYMV) the chain is Extracellular. Residues 649-669 (AVTIYLTGSAIELVLFFVPAI) traverse the membrane as a helical segment. The Cytoplasmic segment spans residues 670-707 (SKYIETSNHGIFKTLSWWGQPRLYVGRGMQETQVSQFK). A helical transmembrane segment spans residues 708–728 (YTFFWILVLLTKFAFSYAFEI). The Extracellular portion of the chain corresponds to 729–759 (KPLIEPTRLIMKVGVRNYEWHEIFPEVKSNA). Residues 760 to 780 (AAIVAVWAPIMVVYFMDTQIW) traverse the membrane as a helical segment. Residues 781–1544 (YSVYCTIFGG…FDFFRMLSCY (764 aa)) lie on the Cytoplasmic side of the membrane. The helical transmembrane segment at 1545–1565 (FTTIGFYFSSLISVIGIYIYL) threads the bilayer. Residues 1566–1595 (YGQLYLVLSGLQKTLILEAKVKNIKSLETA) are Extracellular-facing. The helical transmembrane segment at 1596-1616 (LASQSFIQLGLLTGLPMVMEI) threads the bilayer. Topologically, residues 1617–1620 (GLEK) are cytoplasmic. A helical transmembrane segment spans residues 1621–1641 (GFLIAFQDFILMQLQLAAFFF). The Extracellular segment spans residues 1642–1688 (TFSLGTKTHYFGRTILHGGAKYRPTGRKVVVFHANFSENYRLYSRSH). N1676 carries N-linked (GlcNAc...) asparagine glycosylation. The helical transmembrane segment at 1689 to 1709 (FIKGFELMILLVVYELFKHTS) threads the bilayer. Residues 1710–1715 (QSNMAY) lie on the Cytoplasmic side of the membrane. A helical transmembrane segment spans residues 1716 to 1736 (SFITFSVWFMSFTWLCAPFLF). Topologically, residues 1737–1790 (NPSGFTWEIIVGDWRDWNRWIKEQGGIGIQQDKSWQSWWNDEQAHLRGSGVGAR) are extracellular. The chain crosses the membrane as a helical span at residues 1791-1811 (CLEIILSLRFFVYQYGLVYHL). Over 1812-1819 (DITQSNTN) the chain is Cytoplasmic. The chain crosses the membrane as a helical span at residues 1820–1840 (IIVYALSWVVILATFFTVKAV). The Extracellular segment spans residues 1841–1856 (DLGRQLFSTRKHLVFR). Residues 1857–1877 (FFKVFVFVSILTIIITLANIC) form a helical membrane-spanning segment. At 1878–1884 (HLSVKDL) the chain is on the cytoplasmic side. A helical transmembrane segment spans residues 1885–1905 (LVSCLAFLPTGWGLILIAQAV). The Extracellular portion of the chain corresponds to 1906 to 1928 (RPKIEGTSLWEFTQVLARAYDYG). A helical membrane pass occupies residues 1929–1949 (MGVVLFAPMAILAWLPIISAF). Topologically, residues 1950–1976 (QTRFLFNEAFNRRLQIQPILAGKKKNR) are cytoplasmic.

Belongs to the glycosyltransferase 48 family.

The protein localises to the cell membrane. It carries out the reaction [(1-&gt;3)-beta-D-glucosyl](n) + UDP-alpha-D-glucose = [(1-&gt;3)-beta-D-glucosyl](n+1) + UDP + H(+). Functionally, involved in callose synthesis at the forming cell plate during cytokinesis. During plant growth and development, callose is found as a transitory component of the cell plate in dividing cells, is a major component of pollen mother cell walls and pollen tubes, and is found as a structural component of plasmodesmatal canals. This Arabidopsis thaliana (Mouse-ear cress) protein is Putative callose synthase 8 (CALS8).